We begin with the raw amino-acid sequence, 844 residues long: Aminopeptidase N (844 aa).

Residues glutamate 120 and 253–257 (GAMEN) contribute to the substrate site. Residue histidine 289 participates in Zn(2+) binding. The Proton acceptor role is filled by glutamate 290. 2 residues coordinate Zn(2+): histidine 293 and glutamate 312.

This sequence belongs to the peptidase M1 family. In terms of assembly, monomer. The cofactor is Zn(2+).

The protein resides in the cytoplasm. The catalysed reaction is Release of an N-terminal amino acid, Xaa-|-Yaa- from a peptide, amide or arylamide. Xaa is preferably Ala, but may be most amino acids including Pro (slow action). When a terminal hydrophobic residue is followed by a prolyl residue, the two may be released as an intact Xaa-Pro dipeptide.. In terms of biological role, aminopeptidase N is involved in the degradation of intracellular peptides generated by protein breakdown during normal growth as well as in response to nutrient starvation. This Lactobacillus helveticus (Lactobacillus suntoryeus) protein is Aminopeptidase N (pepN).